Reading from the N-terminus, the 289-residue chain is 4-diphosphocytidyl-2-C-methyl-D-erythritol kinase (289 aa).

K10 is an active-site residue. 94–104 (PVAAGLAGGSS) contacts ATP. Residue D136 is part of the active site.

This sequence belongs to the GHMP kinase family. IspE subfamily.

The catalysed reaction is 4-CDP-2-C-methyl-D-erythritol + ATP = 4-CDP-2-C-methyl-D-erythritol 2-phosphate + ADP + H(+). Its pathway is isoprenoid biosynthesis; isopentenyl diphosphate biosynthesis via DXP pathway; isopentenyl diphosphate from 1-deoxy-D-xylulose 5-phosphate: step 3/6. In terms of biological role, catalyzes the phosphorylation of the position 2 hydroxy group of 4-diphosphocytidyl-2C-methyl-D-erythritol. This Geobacillus sp. (strain WCH70) protein is 4-diphosphocytidyl-2-C-methyl-D-erythritol kinase.